The chain runs to 49 residues: Large ribosomal subunit protein bL33A (49 aa).

This sequence belongs to the bacterial ribosomal protein bL33 family.

The sequence is that of Large ribosomal subunit protein bL33A from Staphylococcus aureus (strain COL).